We begin with the raw amino-acid sequence, 564 residues long: MRSDLDIAQAARLRPIRAVAADLGLTDDDIELYGRSIAKIDLGILQRLTDQPRGRYIVVTAITPTPLGEGKTTTTIGLGQALARLGKRSVVTIRQPSMGPTFGIKGGAAGGGYSQVLPMEQFNLHLTGDIHAIGAAHNLLAAMIDNHLHHGNQCGIDPYAIFWSRVVDISDRVLRNVVVGLGKKEDGPMRQTQFDITVASEVMAILALTTNLHDLRQRLGRIVAAYTRDGAPVTAEDLHAAGAMTVLLKEAIKPNLLQTLEGSPALVHCGPFANIAHGASSVLADMIGLHCADYVVTESGFGADIGFEKFCDIKCRASGLAPDAVVLVATVRALKAHSGRYTITAGRPLDPRLAEENPEDVADGAANLAAQVRIARLFGRPVVVAINRFPDDFPSEVEVIRQVARESGAFDVVESFVFAEGGAGGCDLARAAIQACEAPGTFTPLYPLDMSLREKIETLATKVYGATRVEYTPEASRRLAQFEHQGYGNLPICMAKTHLSISHDPKLRGAPSGYVFPIRDVRLAAGAGFIYPLAGDIRTMPGLPAHPAAERIDIDAEGRTRGLS.

65–72 (TPLGEGKT) serves as a coordination point for ATP.

Belongs to the formate--tetrahydrofolate ligase family.

The enzyme catalyses (6S)-5,6,7,8-tetrahydrofolate + formate + ATP = (6R)-10-formyltetrahydrofolate + ADP + phosphate. It functions in the pathway one-carbon metabolism; tetrahydrofolate interconversion. In Roseiflexus castenholzii (strain DSM 13941 / HLO8), this protein is Formate--tetrahydrofolate ligase.